A 326-amino-acid polypeptide reads, in one-letter code: Transcription factor bHLH143 (326 aa).

The segment covering 175-189 (SDDDDNDDWESDDEV) has biased composition (acidic residues). 2 disordered regions span residues 175–194 (SDDD…STGH) and 234–275 (RDSS…EQSR). Positions 255–271 (PESNISSKQETGSGLSD) are enriched in polar residues. A bHLH domain is found at 263 to 312 (QETGSGLSDEQSRKDKIHTALRILESVVPGAKGKEALLLLDEAIDYLKLL).

In terms of assembly, homodimer.

It is found in the nucleus. The chain is Transcription factor bHLH143 (BHLH143) from Arabidopsis thaliana (Mouse-ear cress).